Reading from the N-terminus, the 1253-residue chain is Cytoplasmic FMR1-interacting protein 2 (1253 aa).

N6-acetyllysine is present on K1037.

This sequence belongs to the CYFIP family. In terms of assembly, component of the WAVE1 complex composed of ABI2, CYFIP2, BRK1, NCKAP1 and WASF1/WAVE1. Interacts with RAC1 (activated form) which causes the complex to dissociate, releasing activated WASF1. The complex can also be activated by NCK1. Interacts with SHANK3; the interaction mediates the association of SHANK3 with the WAVE1 complex. Interacts with FMR1; the interaction occurs in a RNA-dependent manner. Interacts with FXR1 and FXR2. Interacts with TMEM108 (via N-terminus); the interaction associates TMEM108 with the WAVE1 complex.

Its subcellular location is the cytoplasm. It localises to the nucleus. The protein localises to the perinuclear region. It is found in the synapse. The protein resides in the synaptosome. Its function is as follows. Involved in T-cell adhesion and p53-dependent induction of apoptosis. Does not bind RNA. As component of the WAVE1 complex, required for BDNF-NTRK2 endocytic trafficking and signaling from early endosomes. This chain is Cytoplasmic FMR1-interacting protein 2, found in Pongo abelii (Sumatran orangutan).